The following is a 235-amino-acid chain: Large ribosomal subunit protein uL1 (235 aa).

It belongs to the universal ribosomal protein uL1 family. In terms of assembly, part of the 50S ribosomal subunit.

Binds directly to 23S rRNA. The L1 stalk is quite mobile in the ribosome, and is involved in E site tRNA release. Functionally, protein L1 is also a translational repressor protein, it controls the translation of the L11 operon by binding to its mRNA. The polypeptide is Large ribosomal subunit protein uL1 (Mycolicibacterium smegmatis (strain ATCC 700084 / mc(2)155) (Mycobacterium smegmatis)).